A 597-amino-acid polypeptide reads, in one-letter code: MKHIRNFSIIAHIDHGKSTLSDRLIQVCGGLSDREMAAQVLDSMDLERERGITIKAQSVTLDYTAKDGETYQLNFIDTPGHVDFSYEVSRSLAACEGALLVVDAGQGVEAQTLANCYTAIEMDLEVVPILNKIDLPAADPDRVAEEIEEIVGIDATDATRCSAKTGLGVDEVLETIVKSIPAPEGDPDAPTQALIIDSWFDNYLGVVSLVRIKNGSLKKNDKIKVMSTGQVWGIDRIGIFTPKQIDTDVLNTGEVGWVVCGIKDILGAPVGDTLTHAKGGCEERLPGFQKVKPQVYAGLFPVSSDDYENFRDALGKLSLNDASLFYEPESSAALGFGFRCGFLGMLHMEIIQERLEREYDLDLITTAPTVVYEVVLNNGDLLYVDSPSKLPAVNDLDEIREPIARCNILVPADYLGNVISLCVEKRGVQVDMVYHGNQVALTYDIPMSEVVLDFFDRLKSTSRGYASLDYNFQRYEASNMVRVDVLINGDRVDALAIITHHDNAQGRGRLLVEKMKEFIPRQMFDIAIQAAIGAHIIARSTVKQLRKNVIAKCYGGDISRKKKLLKKQKEGKKRMKQIGNVELPQEAFLAILHVGKD.

In terms of domain architecture, tr-type G spans 2–184 (KHIRNFSIIA…TIVKSIPAPE (183 aa)). Residues 14 to 19 (DHGKST) and 131 to 134 (NKID) each bind GTP.

The protein belongs to the TRAFAC class translation factor GTPase superfamily. Classic translation factor GTPase family. LepA subfamily.

The protein resides in the cell inner membrane. The catalysed reaction is GTP + H2O = GDP + phosphate + H(+). In terms of biological role, required for accurate and efficient protein synthesis under certain stress conditions. May act as a fidelity factor of the translation reaction, by catalyzing a one-codon backward translocation of tRNAs on improperly translocated ribosomes. Back-translocation proceeds from a post-translocation (POST) complex to a pre-translocation (PRE) complex, thus giving elongation factor G a second chance to translocate the tRNAs correctly. Binds to ribosomes in a GTP-dependent manner. In Aliivibrio fischeri (strain MJ11) (Vibrio fischeri), this protein is Elongation factor 4.